The chain runs to 208 residues: Uracil phosphoribosyltransferase (208 aa).

Residues Arg-78, Arg-103, and 130–138 (DPMLATGGS) each bind 5-phospho-alpha-D-ribose 1-diphosphate. Uracil-binding positions include Ile-193 and 198–200 (GDA). Asp-199 is a 5-phospho-alpha-D-ribose 1-diphosphate binding site.

It belongs to the UPRTase family. Requires Mg(2+) as cofactor.

It catalyses the reaction UMP + diphosphate = 5-phospho-alpha-D-ribose 1-diphosphate + uracil. Its pathway is pyrimidine metabolism; UMP biosynthesis via salvage pathway; UMP from uracil: step 1/1. Allosterically activated by GTP. Catalyzes the conversion of uracil and 5-phospho-alpha-D-ribose 1-diphosphate (PRPP) to UMP and diphosphate. The protein is Uracil phosphoribosyltransferase of Vibrio parahaemolyticus serotype O3:K6 (strain RIMD 2210633).